The following is a 69-amino-acid chain: uncharacterized protein (69 aa).

This is an uncharacterized protein from Vaccinia virus (strain Copenhagen) (VACV).